The primary structure comprises 424 residues: Enolase (424 aa).

Q162 contributes to the (2R)-2-phosphoglycerate binding site. E204 acts as the Proton donor in catalysis. Residues D241, E284, and D311 each contribute to the Mg(2+) site. The (2R)-2-phosphoglycerate site is built by K336, R365, S366, and K387. Catalysis depends on K336, which acts as the Proton acceptor.

The protein belongs to the enolase family. Mg(2+) serves as cofactor.

Its subcellular location is the cytoplasm. It localises to the secreted. It is found in the cell surface. It catalyses the reaction (2R)-2-phosphoglycerate = phosphoenolpyruvate + H2O. Its pathway is carbohydrate degradation; glycolysis; pyruvate from D-glyceraldehyde 3-phosphate: step 4/5. Catalyzes the reversible conversion of 2-phosphoglycerate (2-PG) into phosphoenolpyruvate (PEP). It is essential for the degradation of carbohydrates via glycolysis. This chain is Enolase, found in Mesorhizobium japonicum (strain LMG 29417 / CECT 9101 / MAFF 303099) (Mesorhizobium loti (strain MAFF 303099)).